The chain runs to 294 residues: Probable enoyl-CoA hydratase 2 (294 aa).

(3R)-3-hydroxydecanoyl-CoA contacts are provided by residues 84–85, K113, 190–195, G213, and F243; these read HG and DLNPLH. Residues 165–269 enclose the MaoC-like domain; that stretch reads DRAPDAISKQ…INPTTILFQS (105 aa). A Microbody targeting signal motif is present at residues 292 to 294; it reads GSL.

This sequence belongs to the short-chain dehydrogenases/reductases (SDR) family.

The protein resides in the peroxisome. The catalysed reaction is a (3R)-3-hydroxyacyl-CoA = a (2E)-enoyl-CoA + H2O. The protein is Probable enoyl-CoA hydratase 2 (mfeB) of Dictyostelium discoideum (Social amoeba).